Consider the following 267-residue polypeptide: Putative carbamate hydrolase RutD (267 aa).

Residues 14–115 (PVMVMISGLG…SALVIINGWL (102 aa)) enclose the AB hydrolase-1 domain.

This sequence belongs to the AB hydrolase superfamily. Hydrolase RutD family.

It carries out the reaction carbamate + 2 H(+) = NH4(+) + CO2. Involved in pyrimidine catabolism. May facilitate the hydrolysis of carbamate, a reaction that can also occur spontaneously. This Cronobacter turicensis (strain DSM 18703 / CCUG 55852 / LMG 23827 / z3032) protein is Putative carbamate hydrolase RutD.